A 382-amino-acid chain; its full sequence is S-adenosylmethionine synthase (382 aa).

Histidine 14 is an ATP binding site. Aspartate 16 contacts Mg(2+). Glutamate 42 contributes to the K(+) binding site. Glutamate 55 and glutamine 91 together coordinate L-methionine. Residues 91–101 form a flexible loop region; sequence QSENIAMGVNL. Residues 156–158, 222–223, aspartate 231, 237–238, alanine 254, and lysine 258 contribute to the ATP site; these read DMK, KF, and RK. Aspartate 231 contacts L-methionine. Lysine 262 is a binding site for L-methionine.

It belongs to the AdoMet synthase family. Homotetramer; dimer of dimers. Mg(2+) serves as cofactor. It depends on K(+) as a cofactor.

The protein resides in the cytoplasm. It carries out the reaction L-methionine + ATP + H2O = S-adenosyl-L-methionine + phosphate + diphosphate. Its pathway is amino-acid biosynthesis; S-adenosyl-L-methionine biosynthesis; S-adenosyl-L-methionine from L-methionine: step 1/1. Functionally, catalyzes the formation of S-adenosylmethionine (AdoMet) from methionine and ATP. The overall synthetic reaction is composed of two sequential steps, AdoMet formation and the subsequent tripolyphosphate hydrolysis which occurs prior to release of AdoMet from the enzyme. The protein is S-adenosylmethionine synthase of Mycoplasmopsis synoviae (strain 53) (Mycoplasma synoviae).